The chain runs to 486 residues: Uridine/cytidine kinase UKL1, chloroplastic (486 aa).

The transit peptide at 1–47 (MPEDSSSLDYAMEKASGPHFSGLRFDGLLSSSPPNSSVVSSLRSAVS) directs the protein to the chloroplast. The span at 31–54 (SSPPNSSVVSSLRSAVSSSSPSSS) shows a compositional bias: low complexity. Residues 31-67 (SSPPNSSVVSSLRSAVSSSSPSSSDPEAPKQPFIIGV) form a disordered region. The interval 59-264 (PKQPFIIGVS…ITQHIHTKLG (206 aa)) is uridine kinase. Residues 274-486 (NVYVIQSTFQ…RYFGTDEEDQ (213 aa)) form a uracil phosphoribosyltransferase region. Residues Lys298, Arg307, and 341-344 (CKKL) contribute to the GTP site. 2 residues coordinate 5-phospho-alpha-D-ribose 1-diphosphate: Arg351 and Arg376. Arg396 lines the GTP pocket. 5-phospho-alpha-D-ribose 1-diphosphate-binding positions include Asp402, 407-410 (TGNS), and Glu473. A uracil-binding site is contributed by 472 to 474 (GEF).

The protein in the N-terminal section; belongs to the uridine kinase family. In the C-terminal section; belongs to the UPRTase family. Expressed in roots, leaves and stems.

It localises to the plastid. It is found in the chloroplast. The protein resides in the cytoplasm. The catalysed reaction is cytidine + ATP = CMP + ADP + H(+). It catalyses the reaction uridine + ATP = UMP + ADP + H(+). It functions in the pathway pyrimidine metabolism; CTP biosynthesis via salvage pathway; CTP from cytidine: step 1/3. It participates in pyrimidine metabolism; UMP biosynthesis via salvage pathway; UMP from uridine: step 1/1. Involved in the pyrimidine salvage pathway. Phosphorylates uridine to uridine monophosphate (UMP). Phosphorylates cytidine to cytidine monophosphate (CMP). Does not possess uracil phosphoribosyltransferase (UPRTase) activity that catalyzes the conversion of uracil and 5-phospho-alpha-D-ribose 1-diphosphate (PRPP) to UMP and diphosphate. The polypeptide is Uridine/cytidine kinase UKL1, chloroplastic (Arabidopsis thaliana (Mouse-ear cress)).